Here is a 420-residue protein sequence, read N- to C-terminus: Glucose-1-phosphate adenylyltransferase (420 aa).

Alpha-D-glucose 1-phosphate is bound by residues Tyr-107, Gly-172, 187 to 188 (EK), and Ser-205.

It belongs to the bacterial/plant glucose-1-phosphate adenylyltransferase family. Homotetramer.

It carries out the reaction alpha-D-glucose 1-phosphate + ATP + H(+) = ADP-alpha-D-glucose + diphosphate. It functions in the pathway glycan biosynthesis; glycogen biosynthesis. Involved in the biosynthesis of ADP-glucose, a building block required for the elongation reactions to produce glycogen. Catalyzes the reaction between ATP and alpha-D-glucose 1-phosphate (G1P) to produce pyrophosphate and ADP-Glc. This Bradyrhizobium diazoefficiens (strain JCM 10833 / BCRC 13528 / IAM 13628 / NBRC 14792 / USDA 110) protein is Glucose-1-phosphate adenylyltransferase.